The chain runs to 573 residues: 3-oxosteroid 1-dehydrogenase (573 aa).

7–36 contacts FAD; the sequence is DLIVVGSGAGACWAPIRAQEQGLKTLVVEK.

Belongs to the FAD-dependent oxidoreductase 2 family. 3-oxosteroid dehydrogenase subfamily. Requires FAD as cofactor.

The protein resides in the cell inner membrane. The catalysed reaction is a 3-oxosteroid + A = a 3-oxo-Delta(1)-steroid + AH2. It participates in lipid metabolism; steroid degradation. Dehydrogenates steroids by introducing a double bond in steroid ring A. In Comamonas testosteroni (Pseudomonas testosteroni), this protein is 3-oxosteroid 1-dehydrogenase.